Here is a 57-residue protein sequence, read N- to C-terminus: Major exported protein (57 aa).

It belongs to the hcp1 family. In terms of assembly, homodimer.

The protein resides in the secreted. The sequence is that of Major exported protein from Pseudomonas syringae pv. ribicola.